A 79-amino-acid chain; its full sequence is Translational regulator CsrA (79 aa).

The protein belongs to the CsrA/RsmA family. Homodimer; the beta-strands of each monomer intercalate to form a hydrophobic core, while the alpha-helices form wings that extend away from the core.

The protein resides in the cytoplasm. Functionally, a translational regulator that binds mRNA to regulate translation initiation and/or mRNA stability. Usually binds in the 5'-UTR at or near the Shine-Dalgarno sequence preventing ribosome-binding, thus repressing translation. Its main target seems to be the major flagellin gene, while its function is anatagonized by FliW. This Leptospira biflexa serovar Patoc (strain Patoc 1 / Ames) protein is Translational regulator CsrA.